Here is an 85-residue protein sequence, read N- to C-terminus: MEVILDKRNEMEIVFEGETHTLCNVLRSILMEDEKVKAAAYSIDHPIVGEPQLYIRAGSPKKSLKAAAETLRDRCDEFRRLIESL.

Belongs to the archaeal Rpo11/eukaryotic RPB11/RPC19 RNA polymerase subunit family. As to quaternary structure, part of the RNA polymerase complex.

It localises to the cytoplasm. It carries out the reaction RNA(n) + a ribonucleoside 5'-triphosphate = RNA(n+1) + diphosphate. DNA-dependent RNA polymerase (RNAP) catalyzes the transcription of DNA into RNA using the four ribonucleoside triphosphates as substrates. The sequence is that of DNA-directed RNA polymerase subunit Rpo11 from Methanothermobacter thermautotrophicus (strain ATCC 29096 / DSM 1053 / JCM 10044 / NBRC 100330 / Delta H) (Methanobacterium thermoautotrophicum).